We begin with the raw amino-acid sequence, 475 residues long: Methionine aminopeptidase 2-1 (475 aa).

A compositionally biased stretch (basic and acidic residues) spans Met1–Thr12. Residues Met1 to Leu97 form a disordered region. Residues Asn44–Glu57 show a composition bias toward acidic residues. Residues Lys70–Lys83 are compositionally biased toward basic residues. Residue His211 participates in substrate binding. A divalent metal cation is bound by residues Asp232, Asp243, and His312. Residue His320 coordinates substrate. Residues Glu345 and Glu456 each contribute to the a divalent metal cation site.

This sequence belongs to the peptidase M24A family. Methionine aminopeptidase eukaryotic type 2 subfamily. Co(2+) is required as a cofactor. Requires Zn(2+) as cofactor. It depends on Mn(2+) as a cofactor. Fe(2+) serves as cofactor.

It localises to the cytoplasm. It carries out the reaction Release of N-terminal amino acids, preferentially methionine, from peptides and arylamides.. Functionally, cotranslationally removes the N-terminal methionine from nascent proteins. The N-terminal methionine is often cleaved when the second residue in the primary sequence is small and uncharged (Met-Ala-, Cys, Gly, Pro, Ser, Thr, or Val). This chain is Methionine aminopeptidase 2-1, found in Aspergillus niger (strain ATCC MYA-4892 / CBS 513.88 / FGSC A1513).